Reading from the N-terminus, the 103-residue chain is N(4)-acetylcytidine amidohydrolase (103 aa).

Residues 6-101 (ITFFQRFQDD…QTQFYVIEFK (96 aa)) enclose the ASCH domain. The active-site Proton acceptor is the K21. T24 functions as the Nucleophile in the catalytic mechanism. The Proton donor role is filled by E74.

This sequence belongs to the N(4)-acetylcytidine amidohydrolase family.

It catalyses the reaction N(4)-acetylcytidine + H2O = cytidine + acetate + H(+). It carries out the reaction N(4)-acetyl-2'-deoxycytidine + H2O = 2'-deoxycytidine + acetate + H(+). The catalysed reaction is N(4)-acetylcytosine + H2O = cytosine + acetate + H(+). Catalyzes the hydrolysis of N(4)-acetylcytidine (ac4C). The chain is N(4)-acetylcytidine amidohydrolase (yqfB) from Escherichia coli (strain SE11).